Here is a 305-residue protein sequence, read N- to C-terminus: Thymidylate synthase (305 aa).

DUMP contacts are provided by residues Arg-26 and 160 to 161 (RR). Cys-180 (nucleophile) is an active-site residue. Residues 207–210 (RSCD), Asn-218, and 248–250 (HLY) contribute to the dUMP site. Asp-210 lines the (6R)-5,10-methylene-5,6,7,8-tetrahydrofolate pocket. A (6R)-5,10-methylene-5,6,7,8-tetrahydrofolate-binding site is contributed by Ala-304.

It belongs to the thymidylate synthase family. Bacterial-type ThyA subfamily. Homodimer.

It is found in the cytoplasm. It carries out the reaction dUMP + (6R)-5,10-methylene-5,6,7,8-tetrahydrofolate = 7,8-dihydrofolate + dTMP. It functions in the pathway pyrimidine metabolism; dTTP biosynthesis. Functionally, catalyzes the reductive methylation of 2'-deoxyuridine-5'-monophosphate (dUMP) to 2'-deoxythymidine-5'-monophosphate (dTMP) while utilizing 5,10-methylenetetrahydrofolate (mTHF) as the methyl donor and reductant in the reaction, yielding dihydrofolate (DHF) as a by-product. This enzymatic reaction provides an intracellular de novo source of dTMP, an essential precursor for DNA biosynthesis. The chain is Thymidylate synthase from Sinorhizobium fredii (strain NBRC 101917 / NGR234).